A 455-amino-acid polypeptide reads, in one-letter code: Protein png1 (455 aa).

The disordered stretch occupies residues 1–110 (MTDGRQQHTR…LPVFPSPPRD (110 aa)). Low complexity predominate over residues 38 to 53 (SLQEQSRSRSRTQSPS). The span at 59–73 (HTPPHPSRAPPPPPT) shows a compositional bias: pro residues. The span at 74-98 (GAHYPSSQSPSQQHQQHQLPASSSL) shows a compositional bias: low complexity. Residues Cys199, Cys202, Cys231, and Cys236 each coordinate Zn(2+). Residues 408–455 (NLIPREQTSGRPGEQKTPASMQDTPVDWVAAQQMGPGQSGPDRSQDGR) are disordered.

It belongs to the transglutaminase-like superfamily. PNGase family.

The protein is Protein png1 (png1) of Aspergillus fumigatus (strain ATCC MYA-4609 / CBS 101355 / FGSC A1100 / Af293) (Neosartorya fumigata).